Consider the following 467-residue polypeptide: Neutral protease 2 homolog NFIA_031120 (467 aa).

Residues 1-19 (MKITALASAILAVVHGALA) form the signal peptide. Residues 20-172 (LPARAPALDI…PASIKPLDRR (153 aa)) constitute a propeptide that is removed on maturation. Disulfide bonds link C179–C251 and C258–C276. H300 is a binding site for Zn(2+). The active site involves E301. Zn(2+) is bound by residues H304 and D315. Residues 359 to 451 (WDGNSQPGQT…TMWDGSSEPG (93 aa)) show a composition bias toward polar residues. The segment at 359 to 467 (WDGNSQPGQT…HTTWGNFYQA (109 aa)) is disordered.

The protein belongs to the peptidase M35 family. It depends on Zn(2+) as a cofactor.

The protein localises to the secreted. It catalyses the reaction Preferential cleavage of bonds with hydrophobic residues in P1'. Also 3-Asn-|-Gln-4 and 8-Gly-|-Ser-9 bonds in insulin B chain.. Its function is as follows. Secreted metalloproteinase that allows assimilation of proteinaceous substrates. Shows high activities on basic nuclear substrates such as histone and protamine. The polypeptide is Neutral protease 2 homolog NFIA_031120 (Neosartorya fischeri (strain ATCC 1020 / DSM 3700 / CBS 544.65 / FGSC A1164 / JCM 1740 / NRRL 181 / WB 181) (Aspergillus fischerianus)).